A 243-amino-acid polypeptide reads, in one-letter code: Venom nerve growth factor (243 aa).

Residues 1–18 (MSMLCYTLIIAFLIGIWA) form the signal peptide. Positions 19–125 (APKSEDNVPL…TLNRNIWANN (107 aa)) are excised as a propeptide. Residues 47–66 (GLKTSRNTDQHHPTPKKSED) show a composition bias toward basic and acidic residues. Residues 47-70 (GLKTSRNTDQHHPTPKKSEDQELG) form a disordered region. 3 disulfide bridges follow: Cys139–Cys204, Cys182–Cys232, and Cys192–Cys234. An N-linked (GlcNAc...) asparagine glycan is attached at Asn148.

The protein belongs to the NGF-beta family. Homodimer. Expressed by the venom gland.

It is found in the secreted. Its function is as follows. Nerve growth factor is important for the development and maintenance of the sympathetic and sensory nervous systems. It stimulates division and differentiation of sympathetic and embryonic sensory neurons as well as basal forebrain cholinergic neurons in the brain. Its relevance in the snake venom is not clear. However, it has been shown to inhibit metalloproteinase-dependent proteolysis of platelet glycoprotein Ib alpha, suggesting a metalloproteinase inhibition to prevent metalloprotease autodigestion and/or protection against prey proteases. Binds a lipid between the two protein chains in the homodimer. The lipid-bound form promotes histamine relase from mouse mast cells, contrary to the lipid-free form. This is Venom nerve growth factor from Bungarus multicinctus (Many-banded krait).